We begin with the raw amino-acid sequence, 311 residues long: GTP cyclohydrolase MptA (311 aa).

Belongs to the GTP cyclohydrolase IV family. As to quaternary structure, homodimer. Fe(2+) is required as a cofactor.

The enzyme catalyses GTP + H2O = 7,8-dihydroneopterin 2',3'-cyclic phosphate + formate + diphosphate + H(+). It functions in the pathway cofactor biosynthesis; 5,6,7,8-tetrahydromethanopterin biosynthesis. Its function is as follows. Converts GTP to 7,8-dihydro-D-neopterin 2',3'-cyclic phosphate, the first intermediate in the biosynthesis of coenzyme methanopterin. The sequence is that of GTP cyclohydrolase MptA from Methanocorpusculum labreanum (strain ATCC 43576 / DSM 4855 / Z).